Consider the following 176-residue polypeptide: Ribosome rescue factor SmrB (176 aa).

The region spanning 93 to 168 (LDLHGYRQSE…GDAALLVLID (76 aa)) is the Smr domain.

Belongs to the SmrB family. As to quaternary structure, associates with collided ribosomes, but not with correctly translating polysomes.

Acts as a ribosome collision sensor. Detects stalled/collided disomes (pairs of ribosomes where the leading ribosome is stalled and a second ribosome has collided with it) and endonucleolytically cleaves mRNA at the 5' boundary of the stalled ribosome. Stalled/collided disomes form a new interface (primarily via the 30S subunits) that binds SmrB. Cleaved mRNA becomes available for tmRNA ligation, leading to ribosomal subunit dissociation and rescue of stalled ribosomes. The polypeptide is Ribosome rescue factor SmrB (Shewanella sp. (strain MR-4)).